The chain runs to 316 residues: Phosphoglycerate mutase-like protein AT74 (316 aa).

The active-site Tele-phosphohistidine intermediate is the histidine 17. Glutamate 106 functions as the Proton donor/acceptor in the catalytic mechanism. Residues 275-316 (KECETEATEDREEEEEEEGKRVNLLTSSEYSNEPELYNGQCC) are disordered. The span at 279–291 (TEATEDREEEEEE) shows a compositional bias: acidic residues.

This sequence belongs to the phosphoglycerate mutase family. As to expression, expressed in roots, leaves, stems, flowers and siliques.

Phosphoglycerate mutase-like protein lacking PGM activity. May play a role in carbohydrates metabolism. This is Phosphoglycerate mutase-like protein AT74 from Arabidopsis thaliana (Mouse-ear cress).